Consider the following 392-residue polypeptide: MGDGQAGSVININGSASGQQAPTSNSPTLTRKSSSSELPPELRILCFDLTHYNQTTQFLLSCAGVFILYILYGYLQELIFTVEGFKPFGWFLTLVQFGYYIGFGLVERRLEAYRSGRRSLWNVEPAPRCIPMKTYLVLAALTLGTMGLSNSSLGYLNYPTQVIFKCCKLIPVLVGSILIQGKRYGPLDFAAASCMCIGLAWFTLADSQMTPNFNLLGVAMISGALLCDAAIGNVQEKAMKEHKAPSSEVVFYSYGLGFVYLFVIMLVTGNFFSGFAFCLEHPLQTFGYGFLFSLSGYLGIQFVLALVRSSGAPIAATVTTARKAVTIAFSFVLFSKPFTVQYLWSGLIVVLGIYLNVYSKKNKLTFADIRSRFKQFGFRLARSPSRKFLVEV.

The tract at residues 11–35 (NINGSASGQQAPTSNSPTLTRKSSS) is disordered. Transmembrane regions (helical) follow at residues 62–82 (CAGV…IFTV), 87–107 (PFGW…GLVE), 136–156 (LVLA…LGYL), 159–179 (PTQV…SILI), 185–205 (GPLD…FTLA), 212–232 (NFNL…AAIG), 249–269 (VVFY…LVTG), 286–306 (FGYG…VLAL), 314–334 (IAAT…FVLF), and 338–358 (FTVQ…LNVY).

It belongs to the nucleotide-sugar transporter family. SLC35B subfamily.

The protein localises to the golgi apparatus membrane. Its function is as follows. Mediates the transport of adenosine 3'-phospho 5'-phosphosulfate (PAPS), from cytosol into Golgi. PAPS is a universal sulfuryl donor for sulfation events that take place in the Golgi. Essential for viability. Involved in glycosaminoglycan synthesis and the subsequent signaling. May be involved in hh and dpp signaling by controlling the sulfation of heparan sulfate (HS). The polypeptide is Adenosine 3'-phospho 5'-phosphosulfate transporter 2 (Drosophila pseudoobscura pseudoobscura (Fruit fly)).